The sequence spans 352 residues: Peptide chain release factor 1 (352 aa).

An N5-methylglutamine modification is found at Gln-229.

This sequence belongs to the prokaryotic/mitochondrial release factor family. In terms of processing, methylated by PrmC. Methylation increases the termination efficiency of RF1.

The protein resides in the cytoplasm. Its function is as follows. Peptide chain release factor 1 directs the termination of translation in response to the peptide chain termination codons UAG and UAA. The protein is Peptide chain release factor 1 of Acidiphilium cryptum (strain JF-5).